A 478-amino-acid chain; its full sequence is GTPase Obg (478 aa).

Residues 2-159 (TTFVDRVELH…QDIHLELKTV (158 aa)) enclose the Obg domain. Residues 60-88 (YHHSPHRKATNGKPGEGGNRSGKDGQDLV) are disordered. Residues 160 to 330 (ADVALVGYPS…LSFALAELVA (171 aa)) form the OBG-type G domain. GTP is bound by residues 166–173 (GYPSAGKS), 191–195 (FTTLV), 212–215 (DVPG), 282–285 (NKID), and 311–313 (SAV). 2 residues coordinate Mg(2+): S173 and T193. Residues 348 to 430 (PKAVDDAGFT…DNAVVFDWEP (83 aa)) enclose the OCT domain. Residues 438–478 (MLGRRGEDHRFEAPRPAAQRRRDRDAERDEAQQEFDGFEPF) form a disordered region. 2 stretches are compositionally biased toward basic and acidic residues: residues 439-450 (LGRRGEDHRFEA) and 457-468 (RRRDRDAERDEA). Residues 469-478 (QQEFDGFEPF) are compositionally biased toward acidic residues.

This sequence belongs to the TRAFAC class OBG-HflX-like GTPase superfamily. OBG GTPase family. Monomer. Requires Mg(2+) as cofactor.

The protein resides in the cytoplasm. Its subcellular location is the cell membrane. In terms of biological role, plays an unknown essential role and a regulatory role in sporulation. Overexpression suppresses sporulation although cell growth rate was not reduced. Impaired differentiation was eliminated by addition of decoyinine, an inhibitor of GMP synthesis. Overexpression has no effect on undecylprodigiosin production, but decreases actinorhodin production. Functionally, an essential GTPase which binds GTP, GDP and possibly (p)ppGpp with moderate affinity, with high nucleotide exchange rates and a fairly low GTP hydrolysis rate. Plays a role in control of the cell cycle, stress response, ribosome biogenesis and in those bacteria that undergo differentiation, in morphogenesis control. This chain is GTPase Obg, found in Streptomyces coelicolor (strain ATCC BAA-471 / A3(2) / M145).